Here is a 239-residue protein sequence, read N- to C-terminus: 1-(5-phosphoribosyl)-5-[(5-phosphoribosylamino)methylideneamino] imidazole-4-carboxamide isomerase (239 aa).

Asp8 acts as the Proton acceptor in catalysis. Asp129 functions as the Proton donor in the catalytic mechanism.

The protein belongs to the HisA/HisF family.

It is found in the cytoplasm. It carries out the reaction 1-(5-phospho-beta-D-ribosyl)-5-[(5-phospho-beta-D-ribosylamino)methylideneamino]imidazole-4-carboxamide = 5-[(5-phospho-1-deoxy-D-ribulos-1-ylimino)methylamino]-1-(5-phospho-beta-D-ribosyl)imidazole-4-carboxamide. It participates in amino-acid biosynthesis; L-histidine biosynthesis; L-histidine from 5-phospho-alpha-D-ribose 1-diphosphate: step 4/9. This is 1-(5-phosphoribosyl)-5-[(5-phosphoribosylamino)methylideneamino] imidazole-4-carboxamide isomerase from Pelagibacter ubique (strain HTCC1062).